Here is a 75-residue protein sequence, read N- to C-terminus: Small ribosomal subunit protein bS18 (75 aa).

It belongs to the bacterial ribosomal protein bS18 family. Part of the 30S ribosomal subunit. Forms a tight heterodimer with protein bS6.

In terms of biological role, binds as a heterodimer with protein bS6 to the central domain of the 16S rRNA, where it helps stabilize the platform of the 30S subunit. In Shewanella amazonensis (strain ATCC BAA-1098 / SB2B), this protein is Small ribosomal subunit protein bS18.